The chain runs to 432 residues: Adenylosuccinate synthetase (432 aa).

GTP is bound by residues 13–19 (GDEGKGK) and 41–43 (GHT). D14 functions as the Proton acceptor in the catalytic mechanism. Mg(2+)-binding residues include D14 and G41. IMP contacts are provided by residues 14-17 (DEGK), 39-42 (NAGH), T130, R144, Q225, T240, and R304. Residue H42 is the Proton donor of the active site. Residue 300–306 (ATTGRRR) coordinates substrate. GTP contacts are provided by residues R306, 332–334 (KLD), and 415–417 (STG).

This sequence belongs to the adenylosuccinate synthetase family. As to quaternary structure, homodimer. The cofactor is Mg(2+).

It localises to the cytoplasm. The catalysed reaction is IMP + L-aspartate + GTP = N(6)-(1,2-dicarboxyethyl)-AMP + GDP + phosphate + 2 H(+). It functions in the pathway purine metabolism; AMP biosynthesis via de novo pathway; AMP from IMP: step 1/2. Functionally, plays an important role in the de novo pathway of purine nucleotide biosynthesis. Catalyzes the first committed step in the biosynthesis of AMP from IMP. In Enterobacter sp. (strain 638), this protein is Adenylosuccinate synthetase.